Consider the following 324-residue polypeptide: MALLALASAVPSALLALAVFRVPAWACLLCFTTYSERLRICQMFVGMRSPKLEECEEAFTAAFQGLSDTEINYDERSHLHDTFTQMTHALQELAAAQGSFEVAFPDAAEKMKKVITQLKEAQACIPPCGLQEFARRFLCSGCYSRVCDLPLDCPVQDVTVTRGDQAMFSCIVNFQLPKEEITYSWKFAGGGLRTQDLSYFRDMPRAEGYLARIRPAQLTHRGTFSCVIKQDQRPLARLYFFLNVTGPPPRAETELQASFREVLRWAPRDAELIEPWRPSLGELLARPEALTPSNLFLLAVLGALASASATVLAWMFFRWYCSGN.

Positions 1–26 are cleaved as a signal peptide; it reads MALLALASAVPSALLALAVFRVPAWA. The short motif at 27-30 is the CXXC motif element; the sequence is CLLC. 6 disulfide bridges follow: C27/C139, C30/C142, C41/C55, C124/C147, C128/C153, and C170/C226. Residues 27–295 lie on the Extracellular side of the membrane; it reads CLLCFTTYSE…RPEALTPSNL (269 aa). The short motif at 139-142 is the CXXC motif element; the sequence is CSGC. Positions 150 to 236 constitute an Ig-like domain; the sequence is PLDCPVQDVT…VIKQDQRPLA (87 aa). An N-linked (GlcNAc...) asparagine glycan is attached at N243. The helical transmembrane segment at 296–316 threads the bilayer; that stretch reads FLLAVLGALASASATVLAWMF. The Cytoplasmic portion of the chain corresponds to 317-324; that stretch reads FRWYCSGN.

The protein belongs to the SPACA6 family. Forms a complex with IZUMO1 and TMEM81 on spermatocyte cell membrane required for fertilization. In terms of tissue distribution, detected at the sperm head, equatorial region, neck and midpiece (at protein level). Expressed in testis.

The protein resides in the cytoplasmic vesicle. It localises to the secretory vesicle. It is found in the acrosome membrane. Its function is as follows. Sperm protein required for fusion of sperm with the egg membrane during fertilization. May regulate the expression of sperm surface protein DCST2. The protein is Sperm acrosome membrane-associated protein 6 of Homo sapiens (Human).